Consider the following 105-residue polypeptide: Pyrimidine/purine nucleoside phosphorylase (105 aa).

Belongs to the nucleoside phosphorylase PpnP family.

It catalyses the reaction a purine D-ribonucleoside + phosphate = a purine nucleobase + alpha-D-ribose 1-phosphate. The catalysed reaction is adenosine + phosphate = alpha-D-ribose 1-phosphate + adenine. It carries out the reaction cytidine + phosphate = cytosine + alpha-D-ribose 1-phosphate. The enzyme catalyses guanosine + phosphate = alpha-D-ribose 1-phosphate + guanine. It catalyses the reaction inosine + phosphate = alpha-D-ribose 1-phosphate + hypoxanthine. The catalysed reaction is thymidine + phosphate = 2-deoxy-alpha-D-ribose 1-phosphate + thymine. It carries out the reaction uridine + phosphate = alpha-D-ribose 1-phosphate + uracil. The enzyme catalyses xanthosine + phosphate = alpha-D-ribose 1-phosphate + xanthine. Catalyzes the phosphorolysis of diverse nucleosides, yielding D-ribose 1-phosphate and the respective free bases. Can use uridine, adenosine, guanosine, cytidine, thymidine, inosine and xanthosine as substrates. Also catalyzes the reverse reactions. The polypeptide is Pyrimidine/purine nucleoside phosphorylase (Anaeromyxobacter sp. (strain Fw109-5)).